A 949-amino-acid chain; its full sequence is MDPTRPPFRGSPFHTPLGVRPPVLETKEEGPHGRAVLLPRGRALLGASAPSSDTTQRDPSDSRNVLPALFRGMGIETKPSGIPGRGGPVFGRGFLSTMSSGDGPDQPLSEPSIRPSLSTRVQQASDFSTERVALGRARFPIPPVSMEKPHVPTGRGLLFPSVLPTLTSDPVPKESPIATLQIEKEEKWEPLPKKGSKGSPCQLGLNLIKINFQNEAVYQYHVTFTPIVECRSMRFGMMKDHRSVTGPVTAFDGSILYLPVKLAQTVELESERRTDGQKIKITIQMTKILDPSSDLCLPFYNVVMRRVFKILDLKLVGRNFYDPASSTVLQQYRLQVWPGYAANIRKTDGGLFLLVDITHKIIRSDSVLDIMNILYQQSPENFQDEVTKQLVGSIVITRYNNRTYRIDDIEWNMSPKDSFSMSDGSKISFIDYYSKNYGITVKELDQPLLLHRPSERKAPKGKALDIVLLLPELAFMTGIPEKMRKDFRAMKDLTQQIHLSPKQHHISLGKLLKRIESSADAKNELQRWGLFLDTDIHMTTGRILPIEKINLRNNSFPAGEDLNWNREVTREACRSSVHLLYWAMIYPKRASAQAQELSSMLERIGGPIGIRVNHPNCVELRDDRVETYARSIKSLLEGEGKVQLLVCLISGTRDDLYGAIKKLCCVQNPVPSQVINTRTISQPQKLRSIAQKILLQINCKLGGELWGVDIPLKSVMVIGMDVYHDPSRGMRSVLGFVASINSCLTAWYSRVVFQLPNQEIMDSLKLCLVAALQKFFEVNHSLPEKIVVYRDGVSDGQLNTVENYEIPQLQTCFQTFDNYNPRMVVIVVQKRVSTNLYSTATGQFLTPQPGTVIDHTVTNRKWIDFFLMSHHVRQGCGIPTHYICVMNTANLGPDHLQRLTFKLCHMYWNWPGTIRVPAPCKYAHKLAFLSGQFLHHEPSIKLCDKLFFL.

The disordered stretch occupies residues 1 to 125; the sequence is MDPTRPPFRG…SLSTRVQQAS (125 aa). Over residues 115-125 the composition is skewed to polar residues; it reads PSLSTRVQQAS. Positions 366–478 constitute a PAZ domain; it reads SVLDIMNILY…LLPELAFMTG (113 aa). The 292-residue stretch at 644-935 folds into the Piwi domain; it reads LLVCLISGTR…LAFLSGQFLH (292 aa). Catalysis depends on residues Asp721, Glu759, Asp791, and His924.

The protein belongs to the argonaute family. Piwi subfamily. In terms of assembly, component of the PET complex. The cofactor is Mg(2+). In terms of processing, methylated on arginine residues; required for the interaction with Tudor domain-containing protein and subsequent localization to the meiotic nuage, also named P granule. Expressed in oocytes, testis and liver (at protein level).

It localises to the cytoplasm. The protein localises to the nucleus. Its function is as follows. Endoribonuclease that plays a central role during spermatogenesis by repressing transposable elements and preventing their mobilization, which is essential for the germline integrity. Plays an essential role in meiotic differentiation of spermatocytes, germ cell differentiation and in self-renewal of spermatogonial stem cells. Acts via the piRNA metabolic process, which mediates the repression of transposable elements during meiosis by forming complexes composed of piRNAs and Piwi proteins and govern the methylation and subsequent repression of transposons. During piRNA biosynthesis, plays a key role in the piRNA amplification loop, also named ping-pong amplification cycle, by acting as a 'slicer-competent' piRNA endoribonuclease that cleaves primary piRNAs, which are then loaded onto 'slicer-incompetent' piwil4. Piwil2 slicing produces a pre-miRNA intermediate, which is then processed in mature piRNAs, and as well as a 16 nucleotide by-product that is degraded. Required for piwil4/miwi2 nuclear localization and association with secondary piRNAs antisense. Represses circadian rhythms by promoting the stability and activity of core clock components BMAL1 and CLOCK. The polypeptide is Piwi-like protein 2 (piwil2) (Xenopus tropicalis (Western clawed frog)).